A 382-amino-acid polypeptide reads, in one-letter code: Trophoblast glycoprotein-like (382 aa).

The signal sequence occupies residues 1–26 (MAPRAGQPGLQGLLLVAAALSQPAAP). Disulfide bonds link cysteine 27/cysteine 33 and cysteine 31/cysteine 43. At 27-307 (CPFQCYCFGG…EAAGPELEAS (281 aa)) the chain is on the extracellular side. LRR repeat units lie at residues 57–80 (PPDA…AFAG), 93–116 (LPLL…AFDG), 117–140 (LPSL…AFRG), 171–194 (LAEL…ALRL), and 196–217 (RLEQ…ELRA). The N-linked (GlcNAc...) asparagine glycan is linked to asparagine 62. Cystine bridges form between cysteine 238–cysteine 264 and cysteine 240–cysteine 285. A helical membrane pass occupies residues 308–328 (YVFFGLVLALIGLIFLMVLYL). Over 329–382 (NRRGIQRWMRNLREACRDQMEGYHYRYEQDADPRRAPAPAAPAGSRATSPGSGL) the chain is Cytoplasmic. The segment at 358–382 (DADPRRAPAPAAPAGSRATSPGSGL) is disordered. Residues 365–382 (PAPAAPAGSRATSPGSGL) show a composition bias toward low complexity.

It is found in the membrane. The chain is Trophoblast glycoprotein-like (TPBGL) from Homo sapiens (Human).